We begin with the raw amino-acid sequence, 335 residues long: Type 1 fimbrin D-mannose specific adhesin (335 aa).

The N-terminal stretch at 1-22 (MKIYSALLLAGTALFFTHPALA) is a signal peptide.

It belongs to the fimbrial protein family.

Its subcellular location is the fimbrium. Functionally, involved in regulation of length and mediation of adhesion of type 1 fimbriae (but not necessary for the production of fimbriae). A mannose-binding adhesin. This Salmonella typhimurium (strain LT2 / SGSC1412 / ATCC 700720) protein is Type 1 fimbrin D-mannose specific adhesin (fimH).